The chain runs to 134 residues: Small ribosomal subunit protein uS9 (134 aa).

The disordered stretch occupies residues 97–134 (ENRQDLKSCGFLTRDPRKKERKKYGHKKARKSFQFSKR). The span at 115–134 (KERKKYGHKKARKSFQFSKR) shows a compositional bias: basic residues.

This sequence belongs to the universal ribosomal protein uS9 family.

The sequence is that of Small ribosomal subunit protein uS9 (rpsI) from Chlamydia pneumoniae (Chlamydophila pneumoniae).